A 260-amino-acid chain; its full sequence is 1-(5-phosphoribosyl)-5-[(5-phosphoribosylamino)methylideneamino] imidazole-4-carboxamide isomerase (260 aa).

Residue D8 is the Proton acceptor of the active site. D130 (proton donor) is an active-site residue.

This sequence belongs to the HisA/HisF family.

It is found in the cytoplasm. The catalysed reaction is 1-(5-phospho-beta-D-ribosyl)-5-[(5-phospho-beta-D-ribosylamino)methylideneamino]imidazole-4-carboxamide = 5-[(5-phospho-1-deoxy-D-ribulos-1-ylimino)methylamino]-1-(5-phospho-beta-D-ribosyl)imidazole-4-carboxamide. It participates in amino-acid biosynthesis; L-histidine biosynthesis; L-histidine from 5-phospho-alpha-D-ribose 1-diphosphate: step 4/9. In Chlorobaculum tepidum (strain ATCC 49652 / DSM 12025 / NBRC 103806 / TLS) (Chlorobium tepidum), this protein is 1-(5-phosphoribosyl)-5-[(5-phosphoribosylamino)methylideneamino] imidazole-4-carboxamide isomerase.